A 175-amino-acid polypeptide reads, in one-letter code: Large ribosomal subunit protein uL10 (175 aa).

This sequence belongs to the universal ribosomal protein uL10 family. As to quaternary structure, part of the ribosomal stalk of the 50S ribosomal subunit. The N-terminus interacts with L11 and the large rRNA to form the base of the stalk. The C-terminus forms an elongated spine to which L12 dimers bind in a sequential fashion forming a multimeric L10(L12)X complex.

Its function is as follows. Forms part of the ribosomal stalk, playing a central role in the interaction of the ribosome with GTP-bound translation factors. This chain is Large ribosomal subunit protein uL10, found in Synechococcus sp. (strain CC9311).